The primary structure comprises 366 residues: MKKTLLATAIAGAMAASGAQAATVYNQDGTKLDIYGNVQIGFRNIEAENDNGNIETQNDVFDNGSTIGFAAEHVIYDGLTGYMKIEFDDFKADEMKTAGRDAGDTAYVGLKGNFGDVKLGSYDTLMDDWIQDPITNNEYFDVSDTSGSGSSVVAVGGEVETDQLTYVSPSFNGLELAIGTQYKGDMEEENVTSRGNASVFGGAKYTAGNFSVAATYDNLDNYEVTQTGVDNKQEFGDRYGVTGQYQWNSLRVALKYERFDSDLDNVDSVNFYGLGARYGYGYGDIYGAYQYVDVGGDTFGNVVDDATSGDSPSDTASDRGDDTYNEFIIGGTYNISDAMYTWVEAAFYDREDDEGDGVAAGVTYMF.

The first 21 residues, 1–21 (MKKTLLATAIAGAMAASGAQA), serve as a signal peptide directing secretion.

The protein belongs to the Gram-negative porin family. As to quaternary structure, homotrimer.

It is found in the cell outer membrane. This is Major outer membrane protein from Halomonas elongata (strain ATCC 33173 / DSM 2581 / NBRC 15536 / NCIMB 2198 / 1H9).